A 555-amino-acid chain; its full sequence is WRKY transcription factor WRKY24 (555 aa).

2 disordered regions span residues 38–65 (GGGGVSRYKAMTPPSLPLSPPPVSPSSF) and 132–248 (QTAP…CTFP). A compositionally biased stretch (pro residues) spans 51–61 (PSLPLSPPPVS). The span at 163 to 194 (QQQQQPWGYQQQPAGMDAGANAASFGAAPFQA) shows a compositional bias: low complexity. The segment at residues 214-278 (SQRRSSDDGY…YKGTHNHAKP (65 aa)) is a DNA-binding region (WRKY 1). The Nuclear localization signal signature appears at 253-259 (KKKVERS). The disordered stretch occupies residues 270-367 (KGTHNHAKPQ…EGISMAGNRT (98 aa)). Composition is skewed to polar residues over residues 277-294 (KPQNTRRNSGSSAAQVLQ) and 310-320 (TAATPENSSAS). Residues 347 to 356 (DSKRWRKDGD) are compositionally biased toward basic and acidic residues. Positions 379–444 (SDIDILDDGY…YEGKHNHDVP (66 aa)) form a DNA-binding region, WRKY 2. The interval 466–555 (HPYLPNQPPP…DDMFFQNSLY (90 aa)) is transcription repression of gibberellic acid (GA)-induced promoters. 2 disordered regions span residues 471–498 (NQPPPMSYQPTGPQPYALRPDGFGGQGP) and 513–555 (GFDD…NSLY).

Belongs to the WRKY group II-a family. Expressed in aleurone cells. Mostly expressed in aleurone layers and leaves, and, to a lower extent, in roots, panicles and embryos.

It localises to the nucleus. Its function is as follows. Transcription repressor. Interacts specifically with the W box (5'-(T)TGAC[CT]-3'), a frequently occurring elicitor-responsive cis-acting element. Negative regulator of both gibberellic acid (GA) and abscisic acid (ABA) signaling in aleurone cells, probably by interfering with GAM1, via the specific repression of GA- and ABA-induced promoters. This is WRKY transcription factor WRKY24 from Oryza sativa subsp. indica (Rice).